Here is a 398-residue protein sequence, read N- to C-terminus: Cyclic GMP-AMP synthase-like receptor (398 aa).

ATP-binding positions include S57 and 69–71; that span reads EFD. The Mg(2+) site is built by E69, D71, and D192. Residues D192 and 240–247 contribute to the GTP site; that span reads SLSFQEQE. ATP is bound by residues 244–247, K265, and 277–281; these read QEQE and SYYIK. Mn(2+)-binding residues include I288, E289, and D292.

Belongs to the mab-21 family. Mg(2+) serves as cofactor. Requires Mn(2+) as cofactor.

It catalyses the reaction GTP + ATP = 2',3'-cGAMP + 2 diphosphate. The enzyme catalyses GTP + ATP = pppGp(2'-5')A + diphosphate. The catalysed reaction is pppGp(2'-5')A = 2',3'-cGAMP + diphosphate. Its activity is regulated as follows. The enzyme activity is specifically activated by double-stranded RNA (dsRNA). In terms of biological role, nucleotidyltransferase that catalyzes the formation of cyclic GMP-AMP (2',3'-cGAMP) from ATP and GTP and plays a key role in innate immunity. Acts as a key sensor of double-stranded RNA (dsRNA), the presence of dsRNA in the cytoplasm being a danger signal that triggers the immune responses. Directly binds dsRNA, activating the nucleotidyltransferase activity, leading to synthesis of 2',3'-cGAMP, a second messenger that binds to and activates Sting, thereby triggering the antiviral immune response via activation of the NF-kappa-B transcription factor Rel (Relish). The chain is Cyclic GMP-AMP synthase-like receptor from Tribolium castaneum (Red flour beetle).